The sequence spans 1513 residues: Lid2 complex component lid2 (1513 aa).

Residues 56–97 enclose the JmjN domain; that stretch reads GLSVQLNASNMTDPFKFLLDNWHTIFKNGAIKLLPPEGWQIP. The 92-residue stretch at 121-212 folds into the ARID domain; that stretch reads YEKNYDYFKK…YIKPFERDSS (92 aa). Residues 211-253 form a disordered region; sequence SSPSFKSKRSESSTRKIRNTRSSAQQESPIPETSAQSPVQTIQ. Positions 230-253 are enriched in polar residues; the sequence is TRSSAQQESPIPETSAQSPVQTIQ. The PHD-type 1 zinc finger occupies 268–318; sequence GEQCEYCGLDKNPETILLCDGCEAAYHTSCLDPPLTSIPKEDWYCDACKFN. One can recognise a JmjC domain in the interval 408 to 574; sequence KYSSEPWNLH…DGLLNSSISV (167 aa). The residue at position 722 (Ser722) is a Phosphoserine. The segment at 1063 to 1086 is disordered; it reads LSLNDRPGPPMEPASRETSPDSEG. The segment covering 1076 to 1086 has biased composition (basic and acidic residues); sequence ASRETSPDSEG. The PHD-type 2 zinc finger occupies 1093-1145; sequence KKGCIFCFCRLPESGVMIECEICHEWYHAKCLKMSKKKLRQDEKFTCPICDYR. The RING-type 1; degenerate zinc finger occupies 1096–1143; that stretch reads CIFCFCRLPESGVMIECEICHEWYHAKCLKMSKKKLRQDEKFTCPICD. 2 disordered regions span residues 1244-1268 and 1280-1327; these read APNP…RQRQ and ASAI…NNKN. Positions 1257-1268 are enriched in basic residues; the sequence is TRKPRPTKRQRQ. Residues 1301–1313 are compositionally biased toward basic and acidic residues; that stretch reads VEAETKSKSEKSP. The span at 1316 to 1326 shows a compositional bias: polar residues; the sequence is NGTNISDANNK. The PHD-type 3 zinc-finger motif lies at 1352 to 1403; that stretch reads NSSCLCGEEFSPRDSFIDCTICERRFHYDCVGLNNEIADSVSKFTCPICMEQ. The segment at 1354–1401 adopts an RING-type 2; degenerate zinc-finger fold; that stretch reads SCLCGEEFSPRDSFIDCTICERRFHYDCVGLNNEIADSVSKFTCPICM.

In terms of assembly, component of the Lid2 complex composed of ash2, jmj3, lid2, sdc1 and snt2.

It is found in the nucleus. The sequence is that of Lid2 complex component lid2 (lid2) from Schizosaccharomyces pombe (strain 972 / ATCC 24843) (Fission yeast).